The sequence spans 94 residues: uncharacterized protein (94 aa).

In terms of biological role, could be a silencing control element for the regulation of the restriction system. This is an uncharacterized protein from Herpetosiphon aurantiacus (Herpetosiphon giganteus).